The chain runs to 614 residues: Probable indole-3-acetic acid-amido synthetase GH3.2 (614 aa).

This sequence belongs to the IAA-amido conjugating enzyme family. Expressed in roots, flowers and callus.

May catalyze the synthesis of indole-3-acetic acid (IAA)-amino acid conjugates, providing a mechanism for the plant to cope with the presence of excess auxin. This Oryza sativa subsp. japonica (Rice) protein is Probable indole-3-acetic acid-amido synthetase GH3.2 (GH3.2).